The chain runs to 117 residues: Large ribosomal subunit protein bL19 (117 aa).

Belongs to the bacterial ribosomal protein bL19 family.

This protein is located at the 30S-50S ribosomal subunit interface and may play a role in the structure and function of the aminoacyl-tRNA binding site. The protein is Large ribosomal subunit protein bL19 of Colwellia psychrerythraea (strain 34H / ATCC BAA-681) (Vibrio psychroerythus).